Consider the following 191-residue polypeptide: MYGPKDHGWIEVVAGPMYSGKTEELIRRIRRAEIAKQKVQVFKPEIDNRYSKQDVVSHAGDKIQSVPVRSSKEILEKLLDDTDVIGIDEAQFFDDSLVEIVSKIANNNRRVICAGLDMDFKGEPFGPMPKLMAIAEFVDKIQAVCMVCNNPATRTQRLINGKPAKKSDPVVLIGAQESYEARCRKCHRVPK.

ATP contacts are provided by residues 15–22 (GPMYSGKT) and 88–91 (DEAQ). Glu-89 functions as the Proton acceptor in the catalytic mechanism. Zn(2+) contacts are provided by Cys-145, Cys-148, Cys-183, and Cys-186.

This sequence belongs to the thymidine kinase family. As to quaternary structure, homotetramer.

The protein localises to the cytoplasm. The enzyme catalyses thymidine + ATP = dTMP + ADP + H(+). The protein is Thymidine kinase of Clostridium botulinum (strain Loch Maree / Type A3).